The sequence spans 338 residues: uncharacterized protein (338 aa).

This is an uncharacterized protein from Thermoproteus tenax (TTV1).